Reading from the N-terminus, the 86-residue chain is Small ribosomal subunit protein uS17 (86 aa).

It belongs to the universal ribosomal protein uS17 family. As to quaternary structure, part of the 30S ribosomal subunit.

Functionally, one of the primary rRNA binding proteins, it binds specifically to the 5'-end of 16S ribosomal RNA. This Helicobacter pylori (strain P12) protein is Small ribosomal subunit protein uS17.